Reading from the N-terminus, the 900-residue chain is Phosphoenolpyruvate carboxylase (900 aa).

Active-site residues include His-140 and Lys-568.

The protein belongs to the PEPCase type 1 family. Mg(2+) serves as cofactor.

It carries out the reaction oxaloacetate + phosphate = phosphoenolpyruvate + hydrogencarbonate. Functionally, forms oxaloacetate, a four-carbon dicarboxylic acid source for the tricarboxylic acid cycle. The sequence is that of Phosphoenolpyruvate carboxylase from Neisseria meningitidis serogroup C / serotype 2a (strain ATCC 700532 / DSM 15464 / FAM18).